Consider the following 412-residue polypeptide: Subtilisin-like protease 6 (412 aa).

Positions 1–20 are cleaved as a signal peptide; the sequence is MGFITKAIPIVLAALSTVNG. Residues 21–127 constitute a propeptide that is removed on maturation; it reads AKILEAGPHA…VRTSTNGTNL (107 aa). The region spanning 36-120 is the Inhibitor I9 domain; the sequence is KYIVVMKREV…YIEPDFVVRT (85 aa). N-linked (GlcNAc...) asparagine glycosylation is found at Asn-123 and Asn-126. The 278-residue stretch at 135–412 folds into the Peptidase S8 domain; sequence SWGLARVSSK…SKLIYNGSGK (278 aa). Active-site charge relay system residues include Asp-167 and His-198. 2 N-linked (GlcNAc...) asparagine glycosylation sites follow: Asn-252 and Asn-264. Ser-358 acts as the Charge relay system in catalysis. Asn-408 carries an N-linked (GlcNAc...) asparagine glycan.

This sequence belongs to the peptidase S8 family.

It localises to the secreted. In terms of biological role, secreted subtilisin-like serine protease with keratinolytic activity that contributes to pathogenicity. This is Subtilisin-like protease 6 (SUB6) from Trichophyton tonsurans (Scalp ringworm fungus).